The following is a 796-amino-acid chain: YY1-associated protein 1 (796 aa).

2 disordered regions span residues 1 to 45 (MEEE…ATPS) and 463 to 488 (IQPS…SEAP). Residues 23–36 (PPDKREGSAVDPGK) show a composition bias toward basic and acidic residues. Residues 463 to 472 (IQPSPSLQPS) are compositionally biased toward low complexity. A compositionally biased stretch (polar residues) spans 473 to 485 (FNPGKTPAQSTHS). S724 is modified (phosphoserine). The interval 755 to 776 (RQALEPLPQGIQESLNNSSPGD) is disordered. A compositionally biased stretch (polar residues) spans 765-774 (IQESLNNSSP).

As to quaternary structure, interacts with YY1. Interacts with MAD2L2. Interacts with INO80. As to expression, ubiquitous. Detected in small intestine, skeletal muscle, lung, pancreas, brain, stomach, spleen, colon and heart. Detected at very low levels in healthy liver. Highly expressed in most liver carcinomas.

The protein localises to the cytoplasm. The protein resides in the nucleus. Its subcellular location is the nucleoplasm. It is found in the nucleolus. In terms of biological role, associates with the INO80 chromatin remodeling complex, which is responsible for transcriptional regulation, DNA repair, and replication. Enhances transcription activation by YY1. Plays a role in cell cycle regulation. This chain is YY1-associated protein 1, found in Homo sapiens (Human).